A 146-amino-acid polypeptide reads, in one-letter code: Anti-sigma F factor (146 aa).

It belongs to the anti-sigma-factor family.

It catalyses the reaction L-seryl-[protein] + ATP = O-phospho-L-seryl-[protein] + ADP + H(+). The catalysed reaction is L-threonyl-[protein] + ATP = O-phospho-L-threonyl-[protein] + ADP + H(+). Binds to sigma F and blocks its ability to form an RNA polymerase holoenzyme (E-sigma F). Phosphorylates SpoIIAA on a serine residue. This phosphorylation may enable SpoIIAA to act as an anti-anti-sigma factor that counteracts SpoIIAB and thus releases sigma F from inhibition. The sequence is that of Anti-sigma F factor from Geobacillus kaustophilus (strain HTA426).